The chain runs to 156 residues: MTSVIYPGTFDPITNGHLDIIERSAVIFPRVLVAVANSPSKKTLFSLEERVELVRQSVAHLSNVEVFGFSDLLANVIKQHNISAIIRGVRTTIDFEYELQLAALNRLLTKGVESLFFPPAEKWVFVSSTIVREIYLHGGDVAELVPVPVFNALKAR.

Thr9 provides a ligand contact to substrate. ATP-binding positions include 9–10 and His17; that span reads TF. The substrate site is built by Lys41, Leu73, and Arg87. ATP contacts are provided by residues 88-90, Glu98, and 123-129; these read GVR and WVFVSST.

This sequence belongs to the bacterial CoaD family. Homohexamer. Mg(2+) serves as cofactor.

Its subcellular location is the cytoplasm. It carries out the reaction (R)-4'-phosphopantetheine + ATP + H(+) = 3'-dephospho-CoA + diphosphate. It functions in the pathway cofactor biosynthesis; coenzyme A biosynthesis; CoA from (R)-pantothenate: step 4/5. In terms of biological role, reversibly transfers an adenylyl group from ATP to 4'-phosphopantetheine, yielding dephospho-CoA (dPCoA) and pyrophosphate. This chain is Phosphopantetheine adenylyltransferase, found in Haemophilus influenzae (strain PittEE).